The following is a 256-amino-acid chain: MDPTCSSECIYNLIPSDLKEPPQPPRYISIFKATVKDDMQKAKTAMKTMGPAKVEVPSPKDFLKKHSKEKTLPPKKNFDRNVPKKPAVPLKTDHPVMGIQSGKNFINTNAADIIMGVAKKPKPIYVDKRTGDKHDLEPSGLVPKYINKKDYGVTPEYICKRNEEIKKAQEDYDRYIQENLKKAAMKRLSDEEREAVLQGLKKNWEEVHKEFQSLSVFIDSIPKKIRKQRLEEEMKQLEHDIGIIEKHKIIYIANNA.

Residues 83-89 carry the SH3-binding motif; sequence PKKPAVP. The region spanning 160-252 is the Enkurin domain; that stretch reads KRNEEIKKAQ…IIEKHKIIYI (93 aa). Positions 160-255 are interaction with TRPC proteins; that stretch reads KRNEEIKKAQ…KHKIIYIANN (96 aa). One can recognise an IQ domain in the interval 176 to 187; the sequence is IQENLKKAAMKR.

In terms of assembly, microtubule inner protein component of sperm flagellar doublet microtubules. Binds calmodulin via its IQ domain. Interacts with TRPC1, TRPC2, TRPC5, but not TRPC3. Interacts with CFAP45. In terms of tissue distribution, expressed in airway epithelial cells.

Its subcellular location is the cytoplasm. The protein localises to the cytoskeleton. The protein resides in the cilium axoneme. It localises to the flagellum axoneme. Functionally, adapter that functions to localize a calcium-sensitive signal transduction machinery in sperm to a calcium-permeable ion channel. Microtubule inner protein (MIP) part of the dynein-decorated doublet microtubules (DMTs) in cilia axoneme, which is required for motile cilia beating. The protein is Enkurin of Homo sapiens (Human).